The primary structure comprises 466 residues: Benzoate transport protein (466 aa).

The Cytoplasmic portion of the chain corresponds to 1 to 22; it reads MSREINVNQMIDDSKLTPFHWR. Residues 23-43 form a helical membrane-spanning segment; that stretch reads VIILSTLIIIFDGYDLVIYGV. The Periplasmic portion of the chain corresponds to 44–60; sequence ALPLLMKEWAIDPVTAG. A helical membrane pass occupies residues 61 to 81; that stretch reads FIGSIALFGMMFGALIFGTIA. The Cytoplasmic portion of the chain corresponds to 82–93; sequence DKLEHLGVSRKK. The helical transmembrane segment at 94–114 threads the bilayer; sequence VIAVCIILFSLCTVLCGFSET. The Periplasmic portion of the chain corresponds to 115–119; the sequence is TTQFS. Residues 120-140 traverse the membrane as a helical segment; the sequence is IFRFLAGVGIGGVMPNVIALV. Over 141–150 the chain is Cytoplasmic; the sequence is SEYAPKKFKS. The chain crosses the membrane as a helical span at residues 151 to 171; that stretch reads FFVTLMFSGYAIGGMTAAFLG. The Periplasmic portion of the chain corresponds to 172–181; it reads SILVPLYGWK. Residues 182–202 form a helical membrane-spanning segment; sequence IMFMIAGIPLVLLLPLMKVLP. The Cytoplasmic portion of the chain corresponds to 203 to 258; sequence ESIDYLVRKKKDETVRFIMTKMVPSYQYQPDHVFVLNSSNQNQAQAPVKMIFQEQR. Residues 259–279 traverse the membrane as a helical segment; it reads AFSTMMFWCSIFMTLIMVYAL. Topologically, residues 280 to 297 are periplasmic; that stretch reads GNWLPKLMIEAGYNLSKS. Residues 298–318 traverse the membrane as a helical segment; that stretch reads LIFLFSLNVGGMIGSILGGYL. Topologically, residues 319 to 325 are cytoplasmic; sequence ADRYNVK. Residues 326–346 traverse the membrane as a helical segment; that stretch reads FVTMGLLLLGAISLSLLSFQF. At 347–348 the chain is on the periplasmic side; it reads SS. Residues 349–369 form a helical membrane-spanning segment; sequence VILYILIACAGAASIGAQIML. Residues 370–387 are Cytoplasmic-facing; it reads LAYMAKFYAPNVRSTGIG. The helical transmembrane segment at 388–408 threads the bilayer; that stretch reads WGLGMGRVGAILGPILTGWLL. Residues 409–414 are Periplasmic-facing; it reads SLQLPH. Residues 415 to 435 form a helical membrane-spanning segment; that stretch reads FYNFLALSIPAVLGIVTVFLI. Residues 436-466 lie on the Cytoplasmic side of the membrane; sequence NDRRMYQPEPISPIANQNDTTTVKVNEAVSH.

It belongs to the major facilitator superfamily. Aromatic acid:H(+) symporter (AAHS) (TC 2.A.1.15) family.

Its subcellular location is the cell inner membrane. Probable uptake of benzoate. This chain is Benzoate transport protein (benK), found in Acinetobacter baylyi (strain ATCC 33305 / BD413 / ADP1).